Reading from the N-terminus, the 297-residue chain is Putative peptidyl-prolyl cis-trans isomerase YacD (297 aa).

The signal sequence occupies residues 1–32 (MKSRTIWTIILGALLVCCIAVAYTLTKSQAGA). Residues 154–247 (DDSYRIRHIV…NGYAIIQLKE (94 aa)) enclose the PpiC domain.

It catalyses the reaction [protein]-peptidylproline (omega=180) = [protein]-peptidylproline (omega=0). The chain is Putative peptidyl-prolyl cis-trans isomerase YacD (yacD) from Bacillus subtilis (strain 168).